The primary structure comprises 287 residues: Lipoyl synthase (287 aa).

The [4Fe-4S] cluster site is built by cysteine 38, cysteine 43, cysteine 49, cysteine 64, cysteine 68, cysteine 71, and serine 277. The region spanning 50 to 266 (WSRGTATFLL…KTVAESLGLR (217 aa)) is the Radical SAM core domain.

This sequence belongs to the radical SAM superfamily. Lipoyl synthase family. Requires [4Fe-4S] cluster as cofactor.

It localises to the cytoplasm. The enzyme catalyses [[Fe-S] cluster scaffold protein carrying a second [4Fe-4S](2+) cluster] + N(6)-octanoyl-L-lysyl-[protein] + 2 oxidized [2Fe-2S]-[ferredoxin] + 2 S-adenosyl-L-methionine + 4 H(+) = [[Fe-S] cluster scaffold protein] + N(6)-[(R)-dihydrolipoyl]-L-lysyl-[protein] + 4 Fe(3+) + 2 hydrogen sulfide + 2 5'-deoxyadenosine + 2 L-methionine + 2 reduced [2Fe-2S]-[ferredoxin]. It functions in the pathway protein modification; protein lipoylation via endogenous pathway; protein N(6)-(lipoyl)lysine from octanoyl-[acyl-carrier-protein]: step 2/2. In terms of biological role, catalyzes the radical-mediated insertion of two sulfur atoms into the C-6 and C-8 positions of the octanoyl moiety bound to the lipoyl domains of lipoate-dependent enzymes, thereby converting the octanoylated domains into lipoylated derivatives. This Chlorobium phaeobacteroides (strain DSM 266 / SMG 266 / 2430) protein is Lipoyl synthase.